Consider the following 2479-residue polypeptide: Centrosomal protein of 290 kDa (2479 aa).

The interval 1-695 (MPPNINWKEI…IESKNAEGIF (695 aa)) is self-association (with itself or C-terminus). 7 coiled-coil regions span residues 59 to 565 (MKMK…ERGK), 598 to 664 (SLKN…MQKD), 697 to 931 (ASLH…VCEK), 958 to 1027 (SLSE…IEQA), 1071 to 1498 (QRAE…ILSR), 1533 to 1584 (HTLK…LHIL), and 1635 to 2452 (DSLS…SEQL). Over residues 149-163 (ALRNEEAENENSKLR) the composition is skewed to basic and acidic residues. The tract at residues 149 to 168 (ALRNEEAENENSKLRRENKR) is disordered. The interaction with IQCB1 stretch occupies residues 696–896 (DASLHLKAQV…TVLQVNEKSL (201 aa)). The tract at residues 1966 to 2479 (TTGMTVDQVL…EESPVNFPIY (514 aa)) is self-association (with itself or N-terminus). Residues 2458-2479 (SPVAASEEFEDEEESPVNFPIY) are disordered.

In terms of assembly, part of the tectonic-like complex (also named B9 complex). Interacts with ATF4 via its N-terminal region. Associates with the BBSome complex, interacting (via N-terminus) with BBS4. Interacts with IQCB1/NPHP5; IQCB1 and CEP290/NPHP6 are proposed to form a functional NPHP5-6 module localized to the centrosome. Interacts with NPHP4; the interaction likely requires additional interactors. Interacts with ZNF423, FAM161A, CEP162, CEP162, CEP131, TALPID3, CCDC13, CC2D2A, RPGRIP1. Can self-associate (homo- or heteromeric). Interacts with CCP110; required for suppressing cilia formation. Interacts with RPGR. Associates (via C-terminus) with microtubules; association to microtubule is reduced in response to cellular stress, such as ultraviolet light (UV) radiation or heat shock, in a process that requires p38 MAP kinase signaling. Interacts with FAM161A. Interacts with PCM1. Interacts with CCDC66. Interacts with ARMC9 and CSPP1. Post-translationally, ubiquitinated. May undergo monoubiquitination; monoubiquitination is inhibited in response to cellular stress, such as ultraviolet light (UV) radiation or heat shock, but does not cause its displacement from centriolar satellites. In terms of tissue distribution, ubiquitous. Expressed strongly in placenta and weakly in brain.

It localises to the cytoplasm. The protein localises to the cytoskeleton. The protein resides in the microtubule organizing center. It is found in the centrosome. Its subcellular location is the centriolar satellite. It localises to the nucleus. The protein localises to the cell projection. The protein resides in the cilium. It is found in the cilium basal body. Its subcellular location is the centriole. It localises to the cytoplasmic vesicle. In terms of biological role, involved in early and late steps in cilia formation. Its association with CCP110 is required for inhibition of primary cilia formation by CCP110. May play a role in early ciliogenesis in the disappearance of centriolar satellites and in the transition of primary ciliar vesicles (PCVs) to capped ciliary vesicles (CCVs). Required for the centrosomal recruitment of RAB8A and for the targeting of centriole satellite proteins to centrosomes such as of PCM1. Required for the correct localization of ciliary and phototransduction proteins in retinal photoreceptor cells; may play a role in ciliary transport processes. Required for efficient recruitment of RAB8A to primary cilium. In the ciliary transition zone is part of the tectonic-like complex which is required for tissue-specific ciliogenesis and may regulate ciliary membrane composition. Involved in regulation of the BBSome complex integrity, specifically for presence of BBS2, BBS5 and BBS8/TTC8 in the complex, and in ciliary targeting of selected BBSome cargos. May play a role in controlling entry of the BBSome complex to cilia possibly implicating IQCB1/NPHP5. Activates ATF4-mediated transcription. The sequence is that of Centrosomal protein of 290 kDa (CEP290) from Homo sapiens (Human).